The primary structure comprises 424 residues: DUF21 domain-containing protein At4g33700 (424 aa).

Residues 1 to 11 (MAVEYVCCSPN) are Extracellular-facing. Residues 8–191 (CSPNFFIHIA…GKGGELTHDE (184 aa)) form the CNNM transmembrane domain. Residues 12–32 (FFIHIAVIVFLVLFAGLMSGL) form a helical membrane-spanning segment. Residues 33–70 (TLGLMSLSLVDLEVLAKSGTPEHRKYAAKILPVVKNQH) lie on the Cytoplasmic side of the membrane. A helical transmembrane segment spans residues 71–91 (LLLVTLLICNAAAMETLPIFL). Over 92–94 (DGL) the chain is Extracellular. A helical transmembrane segment spans residues 95–115 (VTAWGAILISVTLILLFGEII). At 116–136 (PQSICSRYGLAIGATVAPFVR) the chain is on the cytoplasmic side. A helical transmembrane segment spans residues 137-157 (VLVFICLPVAWPISKLLDFLL). The Extracellular segment spans residues 158-424 (GHRRAALFRR…DETDHHFEDS (267 aa)). Positions 210-271 (MTPISDIFVI…TINPDEEIPV (62 aa)) constitute a CBS 1 domain. 2 N-linked (GlcNAc...) asparagine glycosylation sites follow: Asn273 and Asn319. CBS domains follow at residues 275 to 331 (TIRR…DVDS) and 355 to 416 (PNRA…IFDE). 2 disordered regions span residues 321–340 (SVKE…PQER) and 355–374 (PNRA…SKDN). Ser331 is subject to Phosphoserine.

The protein localises to the membrane. In Arabidopsis thaliana (Mouse-ear cress), this protein is DUF21 domain-containing protein At4g33700 (CBSDUF6).